The chain runs to 505 residues: Cytochrome P450 monooxygenase efuB (505 aa).

A helical membrane pass occupies residues 12–34; sequence GFWPTVAGTVATYLFYQIVATVY. Cys450 is a heme binding site.

This sequence belongs to the cytochrome P450 family. Requires heme as cofactor.

The protein localises to the membrane. Its pathway is secondary metabolite biosynthesis; terpenoid biosynthesis. Cytochrome P450 monooxygenase; part of the gene cluster that mediates the biosynthesis of enfumafungin, a glycosylated fernene-type triterpenoid with potent antifungal activity, mediated by its interaction with beta-1,3-glucan synthase and the fungal cell wall. The pathway begins with the terpene cyclase-glycosyl transferase fusion protein that most likely uses 2,3-oxidosqualene as substrate and catalyzes glycosylation immediately after cyclization. The fernene glycoside then could be processed by the desaturase efuI which catalyzes isomerization of a double bond established by efuA to form the core structure. The latter would then undergo a series of hydroxylations in unknown order at C-2, C-19, C-23 and C-25, which would be catalyzed by two of the three cytochrome P450 monooxygenases efuB, efuG or efuH. The hydroxy-group at C-25 becomes oxidized by the dehydrogenase efuE to enable a spontaneous, non-enzymatic hemiacetal formation with C-23. After hydroxylation at C-2, acetylation by the acetyltransferase efuC takes place. The final steps in enfumafungin biosynthesis require expansion of the 5-membered ring by lactonization via a Baeyer-Villiger reaction mediated by one of the BGC's cytochrome P450 monooxygenases (efuB, efuG or efuH) followed by ring cleavage. This type of reaction would establish a double bond between C-20 and C-21 which could be reduced by the reductase efuL to form the final product. The protein is Cytochrome P450 monooxygenase efuB of Hormonema carpetanum.